The primary structure comprises 652 residues: Protein phosphatase Slingshot homolog 3 (652 aa).

Residues 1–16 (MALVTVSRSPPASGHS) are compositionally biased toward polar residues. The tract at residues 1–31 (MALVTVSRSPPASGHSTPVGPTDRVIRRRGR) is disordered. At Ala2 the chain carries N-acetylalanine. Phosphoserine occurs at positions 9, 37, 85, and 87. Residues 43 to 91 (GAVLGLQDGGEGNDAAEADPEPMEKPSGEEQPAEDQTDNGQGSQSPWKQ) form a disordered region. Positions 80 to 90 (DNGQGSQSPWK) are enriched in polar residues. The DEK-C domain occupies 266–321 (EQMEQAILAELWQVLDASDLDSVTSKEIRQALELRLGCPLQQYRDFIDNQMLLLMA). The Tyrosine-protein phosphatase domain maps to 325 to 466 (RASRIFPHLY…LQTYQGILTA (142 aa)). Residue Cys410 is the Phosphocysteine intermediate of the active site. Disordered stretches follow at residues 484–526 (EPLA…LGLR), 540–580 (LLEP…KGGQ), and 610–652 (RAFQ…EGKA). Residues 540–552 (LLEPSSEPESTTE) show a composition bias toward low complexity. Over residues 642–652 (SVDDSREEGKA) the composition is skewed to basic and acidic residues.

It belongs to the protein-tyrosine phosphatase family. As to quaternary structure, does not bind to, or colocalize with, filamentous actin.

Its subcellular location is the cytoplasm. The protein resides in the cytoskeleton. The protein localises to the nucleus. It catalyses the reaction O-phospho-L-tyrosyl-[protein] + H2O = L-tyrosyl-[protein] + phosphate. The enzyme catalyses O-phospho-L-seryl-[protein] + H2O = L-seryl-[protein] + phosphate. It carries out the reaction O-phospho-L-threonyl-[protein] + H2O = L-threonyl-[protein] + phosphate. Functionally, protein phosphatase which may play a role in the regulation of actin filament dynamics. Can dephosphorylate and activate the actin binding/depolymerizing factor cofilin, which subsequently binds to actin filaments and stimulates their disassembly. The protein is Protein phosphatase Slingshot homolog 3 (Ssh3) of Rattus norvegicus (Rat).